Here is a 445-residue protein sequence, read N- to C-terminus: MGVMFGTDGVRGVANRDLSPLLAFKIGRAGAHVLARQSPNAAMVIGRDTRISGDMLEAALVAGICSAGVDVLKVGVMPTPAVAYLTRKLEAAAGVVISASHNPVDDNGIKFFGATGYKLSDEVEAEIEALVMDECAGVPWPTGGRVGRVRQVGDAADLYVKFACSTAGVDLSGLKIVVDCANGAAYQVAPRVYSRLGAEVVPIFNRPDGININDGCGSTHPEALMEAVVSEKADLGLAHDGDADRVLAVDADGRLVDGDQIMVICARSLHEKGLLANETVVVTVMSNLGLHLALRESGIRVVQTKVGDRYVLEELLRNGARFGGEQSGHIIFLDHNTTGDGILTALQLLSVIKETGKPLKELAGQMERLPQLLENVRVADKALVMNSPVLAEAIEREERLLEGMGRILVRPSGTEPLVRVMAEGKNMGQLKEIVGRLVNIIKEID.

Ser-100 functions as the Phosphoserine intermediate in the catalytic mechanism. Residues Ser-100, Asp-240, Asp-242, and Asp-244 each coordinate Mg(2+). Residue Ser-100 is modified to Phosphoserine.

It belongs to the phosphohexose mutase family. Requires Mg(2+) as cofactor. Activated by phosphorylation.

It carries out the reaction alpha-D-glucosamine 1-phosphate = D-glucosamine 6-phosphate. In terms of biological role, catalyzes the conversion of glucosamine-6-phosphate to glucosamine-1-phosphate. The protein is Phosphoglucosamine mutase of Pelotomaculum thermopropionicum (strain DSM 13744 / JCM 10971 / SI).